Consider the following 290-residue polypeptide: Pyridoxal kinase PdxY (290 aa).

Substrate is bound by residues S12 and 47 to 48; that span reads TQ. ATP-binding positions include D114, E151, K184, and 211–214; that span reads RPLL. D225 lines the substrate pocket.

Belongs to the pyridoxine kinase family. PdxY subfamily. Homodimer. The cofactor is Mg(2+).

It carries out the reaction pyridoxal + ATP = pyridoxal 5'-phosphate + ADP + H(+). It participates in cofactor metabolism; pyridoxal 5'-phosphate salvage; pyridoxal 5'-phosphate from pyridoxal: step 1/1. In terms of biological role, pyridoxal kinase involved in the salvage pathway of pyridoxal 5'-phosphate (PLP). Catalyzes the phosphorylation of pyridoxal to PLP. In Pseudomonas entomophila (strain L48), this protein is Pyridoxal kinase PdxY.